The chain runs to 765 residues: Polyadenylate-binding protein, cytoplasmic and nuclear (765 aa).

Over residues 1–37 (MSADASTTPAADSNVTSTPETSTTPAAPAPEVTAVES) the composition is skewed to low complexity. Positions 1–49 (MSADASTTPAADSNVTSTPETSTTPAAPAPEVTAVESTTAPNASQPHSA) are disordered. Over residues 38–48 (TTAPNASQPHS) the composition is skewed to polar residues. 4 consecutive RRM domains span residues 49–127 (ASLY…WSQR), 137–214 (GNVF…HHIS), 230–307 (TNVY…RAQK), and 333–470 (VNLY…LAQR). Disordered regions lie at residues 364–427 (VMRD…ADKK) and 619–657 (PGYG…PEEA). A compositionally biased stretch (basic and acidic residues) spans 377-427 (ESDKEKENKEATKENEKESSEAEKAEKTEEKPADSGDEKKEDKESKKADKK). Residues 628 to 637 (VPVQQGQMRP) show a composition bias toward low complexity. Residues 659-736 (AGGLTAQALS…ALNVYDEYMK (78 aa)) form the PABC domain. The interval 737 to 765 (NKGGESEATGEAAKPKEAAKETSTEENKS) is disordered. Residues 749 to 765 (AKPKEAAKETSTEENKS) are compositionally biased toward basic and acidic residues.

This sequence belongs to the polyadenylate-binding protein type-1 family.

It is found in the cytoplasm. It localises to the nucleus. Binds the poly(A) tail of mRNA. Appears to be an important mediator of the multiple roles of the poly(A) tail in mRNA biogenesis, stability and translation. In the nucleus, involved in both mRNA cleavage and polyadenylation. Is also required for efficient mRNA export to the cytoplasm. Acts in concert with a poly(A)-specific nuclease (PAN) to affect poly(A) tail shortening, which may occur concomitantly with either nucleocytoplasmic mRNA transport or translational initiation. In the cytoplasm, stimulates translation initiation and regulates mRNA decay through translation termination-coupled poly(A) shortening, probably mediated by PAN. This chain is Polyadenylate-binding protein, cytoplasmic and nuclear (pab1), found in Aspergillus oryzae (strain ATCC 42149 / RIB 40) (Yellow koji mold).